The chain runs to 276 residues: Large ribosomal subunit protein uL2 (276 aa).

The segment at Val-223–Arg-276 is disordered. A compositionally biased stretch (basic residues) spans Lys-251 to Asn-260.

The protein belongs to the universal ribosomal protein uL2 family. As to quaternary structure, part of the 50S ribosomal subunit. Forms a bridge to the 30S subunit in the 70S ribosome.

One of the primary rRNA binding proteins. Required for association of the 30S and 50S subunits to form the 70S ribosome, for tRNA binding and peptide bond formation. It has been suggested to have peptidyltransferase activity; this is somewhat controversial. Makes several contacts with the 16S rRNA in the 70S ribosome. The sequence is that of Large ribosomal subunit protein uL2 from Hyphomonas neptunium (strain ATCC 15444).